A 384-amino-acid chain; its full sequence is Putative glutamate--cysteine ligase 2 (384 aa).

Belongs to the glutamate--cysteine ligase type 2 family. YbdK subfamily.

It catalyses the reaction L-cysteine + L-glutamate + ATP = gamma-L-glutamyl-L-cysteine + ADP + phosphate + H(+). Functionally, ATP-dependent carboxylate-amine ligase which exhibits weak glutamate--cysteine ligase activity. In Ruegeria pomeroyi (strain ATCC 700808 / DSM 15171 / DSS-3) (Silicibacter pomeroyi), this protein is Putative glutamate--cysteine ligase 2.